We begin with the raw amino-acid sequence, 614 residues long: Type VII secretion system protein EssD (614 aa).

The tract at residues 417–445 (QNHVTHGPKDSMVRSEGKHSISSHEMNSS) is disordered. A compositionally biased stretch (basic and acidic residues) spans 423–435 (GPKDSMVRSEGKH).

This sequence belongs to the EssD family. As to quaternary structure, interacts (via C-terminal) with EssG; this interaction blocks EssD activity. Interacts with EssE.

The protein localises to the secreted. It localises to the cell membrane. Component of the type VII secretion system (Ess). Plays a role in Ess secretion during infection. Required for the efficient secretion of EsxA. Required for abscess formation and staphylococcal persistence in host tissues. Possesses a toxic DNase activity that is modulated by EsaG by forming a nuclease toxin-antitoxin pair. This nuclease toxin targets competitor bacteria. The protein is Type VII secretion system protein EssD of Staphylococcus aureus (strain USA300).